Here is a 217-residue protein sequence, read N- to C-terminus: Homeobox protein Hox-B7 (217 aa).

The Antp-type hexapeptide motif lies at 126-131 (IYPWMR). The segment at residues 137 to 196 (RKRGRQTYTRYQTLELEKEFHYNRYLTRRRRIEIAHTLCLTERQIKIWFQNRRMKWKKEN) is a DNA-binding region (homeobox). Residues 192–217 (WKKENKTSGPGTTGQDKAEAEEEEEE) are disordered.

Belongs to the Antp homeobox family. As to quaternary structure, forms a DNA-binding heterodimer with transcription factor PBX1.

It localises to the nucleus. Its function is as follows. Sequence-specific transcription factor which is part of a developmental regulatory system that provides cells with specific positional identities on the anterior-posterior axis. This Mus musculus (Mouse) protein is Homeobox protein Hox-B7 (Hoxb7).